The sequence spans 539 residues: Glucose-6-phosphate isomerase (539 aa).

Glutamate 349 serves as the catalytic Proton donor. Residues histidine 380 and lysine 508 contribute to the active site.

Belongs to the GPI family.

Its subcellular location is the cytoplasm. It carries out the reaction alpha-D-glucose 6-phosphate = beta-D-fructose 6-phosphate. Its pathway is carbohydrate biosynthesis; gluconeogenesis. The protein operates within carbohydrate degradation; glycolysis; D-glyceraldehyde 3-phosphate and glycerone phosphate from D-glucose: step 2/4. Its function is as follows. Catalyzes the reversible isomerization of glucose-6-phosphate to fructose-6-phosphate. In Caulobacter sp. (strain K31), this protein is Glucose-6-phosphate isomerase.